The chain runs to 363 residues: Phospho-N-acetylmuramoyl-pentapeptide-transferase (363 aa).

Helical transmembrane passes span 3 to 23 (TVLIAGAFSLVVSLFGTPLYI), 55 to 75 (VVIILAALLAYGAAHLFTGAL), 76 to 96 (PTVSGLLVLLLMTGLGVVGFL), 116 to 136 (LAGQGLVGIVFAVLALQFPAA), 158 to 178 (LAVFGAVGGTVLFVVWALIIT), 190 to 210 (GLDGLATGATTMVLAAYVLIC), 237 to 257 (LAVVAAAVMGACFGFLWWNAS), 261 to 281 (IFMGDTGSLALGGALAGLAIL), 286 to 306 (ILLVLLGGLFVLITLSVILQV), and 340 to 360 (FWIIAGLFVFLGLGVFYAEWV).

Belongs to the glycosyltransferase 4 family. MraY subfamily. Requires Mg(2+) as cofactor.

It localises to the cell membrane. The catalysed reaction is UDP-N-acetyl-alpha-D-muramoyl-L-alanyl-gamma-D-glutamyl-meso-2,6-diaminopimeloyl-D-alanyl-D-alanine + di-trans,octa-cis-undecaprenyl phosphate = di-trans,octa-cis-undecaprenyl diphospho-N-acetyl-alpha-D-muramoyl-L-alanyl-D-glutamyl-meso-2,6-diaminopimeloyl-D-alanyl-D-alanine + UMP. It participates in cell wall biogenesis; peptidoglycan biosynthesis. Catalyzes the initial step of the lipid cycle reactions in the biosynthesis of the cell wall peptidoglycan: transfers peptidoglycan precursor phospho-MurNAc-pentapeptide from UDP-MurNAc-pentapeptide onto the lipid carrier undecaprenyl phosphate, yielding undecaprenyl-pyrophosphoryl-MurNAc-pentapeptide, known as lipid I. The sequence is that of Phospho-N-acetylmuramoyl-pentapeptide-transferase from Kineococcus radiotolerans (strain ATCC BAA-149 / DSM 14245 / SRS30216).